The following is a 295-amino-acid chain: Bifunctional protein FolD (295 aa).

NADP(+) contacts are provided by residues 166 to 168 (GRS), S195, and I236.

This sequence belongs to the tetrahydrofolate dehydrogenase/cyclohydrolase family. In terms of assembly, homodimer.

The enzyme catalyses (6R)-5,10-methylene-5,6,7,8-tetrahydrofolate + NADP(+) = (6R)-5,10-methenyltetrahydrofolate + NADPH. It catalyses the reaction (6R)-5,10-methenyltetrahydrofolate + H2O = (6R)-10-formyltetrahydrofolate + H(+). It functions in the pathway one-carbon metabolism; tetrahydrofolate interconversion. Catalyzes the oxidation of 5,10-methylenetetrahydrofolate to 5,10-methenyltetrahydrofolate and then the hydrolysis of 5,10-methenyltetrahydrofolate to 10-formyltetrahydrofolate. In Chlorobium chlorochromatii (strain CaD3), this protein is Bifunctional protein FolD.